Here is a 46-residue protein sequence, read N- to C-terminus: Elongation factor Tu (46 aa).

Residues 1–10 are compositionally biased toward basic and acidic residues; that stretch reads MAKGKFERSK. The disordered stretch occupies residues 1 to 20; that stretch reads MAKGKFERSKPHVNVGTIGH. A GTP-binding site is contributed by 19–26; that stretch reads GHVDHGKT.

The protein belongs to the GTP-binding elongation factor family. EF-Tu/EF-1A subfamily. As to quaternary structure, monomer.

It is found in the cytoplasm. Functionally, this protein promotes the GTP-dependent binding of aminoacyl-tRNA to the A-site of ribosomes during protein biosynthesis. The polypeptide is Elongation factor Tu (tufA) (Eikenella corrodens).